We begin with the raw amino-acid sequence, 524 residues long: Sexual development regulator velC (524 aa).

4 disordered regions span residues N114–S195, P322–Y349, V380–R413, and G503–E524. Polar residues-rich tracts occupy residues T131–G153 and L178–S195. One can recognise a Velvet domain in the interval S248–R500. Over residues P393 to D402 the composition is skewed to polar residues.

Belongs to the velvet family. VelC subfamily. In terms of assembly, interacts with vosA.

It is found in the nucleus. In terms of biological role, velvet-domain-containing protein that acts as a positive regulator of sexual development. Positively regulates the production of the sexual fruiting bodies called cleistothecia. The protein is Sexual development regulator velC of Emericella nidulans (strain FGSC A4 / ATCC 38163 / CBS 112.46 / NRRL 194 / M139) (Aspergillus nidulans).